The chain runs to 38 residues: Large ribosomal subunit protein bL36 (38 aa).

The protein belongs to the bacterial ribosomal protein bL36 family.

In Amoebophilus asiaticus (strain 5a2), this protein is Large ribosomal subunit protein bL36.